Here is a 416-residue protein sequence, read N- to C-terminus: N-acetyl-L-cysteine deacetylase (416 aa).

Positions 128, 130, 164, 188, and 380 each coordinate Zn(2+).

This sequence belongs to the peptidase M20 family. The cofactor is Zn(2+). Requires Co(2+) as cofactor.

It catalyses the reaction N-acetyl-L-cysteine + H2O = L-cysteine + acetate. Its pathway is amino-acid metabolism. In terms of biological role, involved in a cysteine salvage pathway from S-alkylcysteine. Catalyzes the last step in this pathway, i.e. the deacetylation of N-acetyl-L-cysteine. This pathway is likely important in the catabolism of alkylated cysteine generated by proteolysis of alkylated glutathione formed in the detoxification of a wide range of electrophiles. This chain is N-acetyl-L-cysteine deacetylase, found in Bacillus subtilis (strain 168).